We begin with the raw amino-acid sequence, 299 residues long: Oxygen-dependent coproporphyrinogen-III oxidase (299 aa).

Substrate is bound at residue Ser-92. Mn(2+) contacts are provided by His-96 and His-106. The active-site Proton donor is the His-106. Position 108–110 (108–110) interacts with substrate; that stretch reads NVR. His-145 and His-175 together coordinate Mn(2+). An important for dimerization region spans residues 240-275; that stretch reads YVEFNLVWDRGTLFGLQTGGRTESILMSMPPLVRWE. Residue 258–260 participates in substrate binding; it reads GGR.

This sequence belongs to the aerobic coproporphyrinogen-III oxidase family. Homodimer. Requires Mn(2+) as cofactor.

The protein resides in the cytoplasm. The enzyme catalyses coproporphyrinogen III + O2 + 2 H(+) = protoporphyrinogen IX + 2 CO2 + 2 H2O. It participates in porphyrin-containing compound metabolism; protoporphyrin-IX biosynthesis; protoporphyrinogen-IX from coproporphyrinogen-III (O2 route): step 1/1. Functionally, involved in the heme biosynthesis. Catalyzes the aerobic oxidative decarboxylation of propionate groups of rings A and B of coproporphyrinogen-III to yield the vinyl groups in protoporphyrinogen-IX. The protein is Oxygen-dependent coproporphyrinogen-III oxidase of Escherichia coli (strain K12 / MC4100 / BW2952).